Consider the following 431-residue polypeptide: Glutamate--tRNA ligase 1 (431 aa).

Positions 6 to 16 (PSPTGDMHIGN) match the 'HIGH' region motif. The short motif at 235 to 239 (KMSKR) is the 'KMSKS' region element. Residue Lys-238 participates in ATP binding.

It belongs to the class-I aminoacyl-tRNA synthetase family. Glutamate--tRNA ligase type 1 subfamily. As to quaternary structure, monomer.

The protein resides in the cytoplasm. The enzyme catalyses tRNA(Glu) + L-glutamate + ATP = L-glutamyl-tRNA(Glu) + AMP + diphosphate. Catalyzes the attachment of glutamate to tRNA(Glu) in a two-step reaction: glutamate is first activated by ATP to form Glu-AMP and then transferred to the acceptor end of tRNA(Glu). The polypeptide is Glutamate--tRNA ligase 1 (Nitratiruptor sp. (strain SB155-2)).